The primary structure comprises 148 residues: IQ domain-containing protein F5 (148 aa).

IQ domains are found at residues 11–40 (ETSA…SAWI) and 67–96 (KTWA…AVRI).

The sequence is that of IQ domain-containing protein F5 (Iqcf5) from Mus musculus (Mouse).